The following is a 354-amino-acid chain: MTGDNLVSAYVSDAERDVEASVRPRRLAEFIAQERVRDQLDLLLQGALRRGSPPDHILLSGPPGLGKTSLANIVAAELGTSIRVTSGPAIERSGDLAAILTSLGEGDVLFIDEIHRIARPAEELLYSAMEDFRVDVVVGKGPGATAIPLDVEPFTLVGATTRAGLLTGPMRDRFGFVAHLDFYSPADLETLLHRSARILGVPITGDGAVEISGRSRGTPRIANRLLRRVRDFAEVRADGVVTREAARAALLVYDVDALGLDRLDRQVLTALVDLFRGGPVGLSTLAVAVGEQPDTVEEVCEPFLVRAGLLARTPRGRVATEAAWRHLGRTPPNGIFGSDAPPASDLFSVEPDQP.

The tract at residues 1–183 is large ATPase domain (RuvB-L); it reads MTGDNLVSAY…FGFVAHLDFY (183 aa). ATP is bound by residues Arg-23, Gly-64, Lys-67, Thr-68, Ser-69, 130–132, Arg-173, Tyr-183, and Arg-220; that span reads EDF. Residue Thr-68 coordinates Mg(2+). Residues 184–254 are small ATPAse domain (RuvB-S); sequence SPADLETLLH…AARAALLVYD (71 aa). A head domain (RuvB-H) region spans residues 257–354; sequence ALGLDRLDRQ…DLFSVEPDQP (98 aa). 2 residues coordinate DNA: Arg-312 and Arg-317. Residues 330–354 form a disordered region; that stretch reads TPPNGIFGSDAPPASDLFSVEPDQP.

Belongs to the RuvB family. As to quaternary structure, homohexamer. Forms an RuvA(8)-RuvB(12)-Holliday junction (HJ) complex. HJ DNA is sandwiched between 2 RuvA tetramers; dsDNA enters through RuvA and exits via RuvB. An RuvB hexamer assembles on each DNA strand where it exits the tetramer. Each RuvB hexamer is contacted by two RuvA subunits (via domain III) on 2 adjacent RuvB subunits; this complex drives branch migration. In the full resolvosome a probable DNA-RuvA(4)-RuvB(12)-RuvC(2) complex forms which resolves the HJ.

It is found in the cytoplasm. The catalysed reaction is ATP + H2O = ADP + phosphate + H(+). Functionally, the RuvA-RuvB-RuvC complex processes Holliday junction (HJ) DNA during genetic recombination and DNA repair, while the RuvA-RuvB complex plays an important role in the rescue of blocked DNA replication forks via replication fork reversal (RFR). RuvA specifically binds to HJ cruciform DNA, conferring on it an open structure. The RuvB hexamer acts as an ATP-dependent pump, pulling dsDNA into and through the RuvAB complex. RuvB forms 2 homohexamers on either side of HJ DNA bound by 1 or 2 RuvA tetramers; 4 subunits per hexamer contact DNA at a time. Coordinated motions by a converter formed by DNA-disengaged RuvB subunits stimulates ATP hydrolysis and nucleotide exchange. Immobilization of the converter enables RuvB to convert the ATP-contained energy into a lever motion, pulling 2 nucleotides of DNA out of the RuvA tetramer per ATP hydrolyzed, thus driving DNA branch migration. The RuvB motors rotate together with the DNA substrate, which together with the progressing nucleotide cycle form the mechanistic basis for DNA recombination by continuous HJ branch migration. Branch migration allows RuvC to scan DNA until it finds its consensus sequence, where it cleaves and resolves cruciform DNA. This Salinispora arenicola (strain CNS-205) protein is Holliday junction branch migration complex subunit RuvB.